A 122-amino-acid polypeptide reads, in one-letter code: S-adenosylmethionine decarboxylase proenzyme (122 aa).

S69 acts as the Schiff-base intermediate with substrate; via pyruvic acid in catalysis. S69 bears the Pyruvic acid (Ser); by autocatalysis mark. H74 functions as the Proton acceptor; for processing activity in the catalytic mechanism. Residue C89 is the Proton donor; for catalytic activity of the active site.

It belongs to the prokaryotic AdoMetDC family. Type 1 subfamily. In terms of assembly, heterotetramer of two alpha and two beta chains arranged as a dimer of alpha/beta heterodimers. Pyruvate serves as cofactor. Post-translationally, is synthesized initially as an inactive proenzyme. Formation of the active enzyme involves a self-maturation process in which the active site pyruvoyl group is generated from an internal serine residue via an autocatalytic post-translational modification. Two non-identical subunits are generated from the proenzyme in this reaction, and the pyruvate is formed at the N-terminus of the alpha chain, which is derived from the carboxyl end of the proenzyme. The post-translation cleavage follows an unusual pathway, termed non-hydrolytic serinolysis, in which the side chain hydroxyl group of the serine supplies its oxygen atom to form the C-terminus of the beta chain, while the remainder of the serine residue undergoes an oxidative deamination to produce ammonia and the pyruvoyl group blocking the N-terminus of the alpha chain.

It catalyses the reaction S-adenosyl-L-methionine + H(+) = S-adenosyl 3-(methylsulfanyl)propylamine + CO2. The protein operates within amine and polyamine biosynthesis; S-adenosylmethioninamine biosynthesis; S-adenosylmethioninamine from S-adenosyl-L-methionine: step 1/1. Catalyzes the decarboxylation of S-adenosylmethionine to S-adenosylmethioninamine (dcAdoMet), the propylamine donor required for the synthesis of the polyamines spermine and spermidine from the diamine putrescine. The sequence is that of S-adenosylmethionine decarboxylase proenzyme from Sulfurisphaera tokodaii (strain DSM 16993 / JCM 10545 / NBRC 100140 / 7) (Sulfolobus tokodaii).